The sequence spans 24 residues: Ascaphin-6 (24 aa).

In terms of tissue distribution, expressed by the skin glands.

It is found in the secreted. Functionally, antimicrobial peptide that shows higher potency against Gram-negative bacteria than against Gram-positive bacteria. Has a very week hemolytic activity. The polypeptide is Ascaphin-6 (Ascaphus truei (Coastal tailed frog)).